The chain runs to 303 residues: HTH-type transcriptional regulator LysG (303 aa).

Residues 6 to 62 enclose the HTH lysR-type domain; the sequence is LDGPQLAALAAVVELGSFDAAAERLHVTPSAVSQRIKSLEQQVGQVLVVREKPCRAT. A DNA-binding region (H-T-H motif) is located at residues 23-42; that stretch reads FDAAAERLHVTPSAVSQRIK.

The protein belongs to the LysR transcriptional regulatory family. Homodimer.

Positively regulates the expression of the exporter LysE and represses its own expression. The sequence is that of HTH-type transcriptional regulator LysG from Mycobacterium bovis (strain ATCC BAA-935 / AF2122/97).